Here is a 213-residue protein sequence, read N- to C-terminus: ATP synthase peripheral stalk subunit OSCP, mitochondrial (213 aa).

A mitochondrion-targeting transit peptide spans methionine 1–proline 23. The SIFI-degron signature appears at alanine 5–proline 23. Lysine 54, lysine 60, lysine 70, and lysine 73 each carry N6-acetyllysine. Lysine 90 is subject to N6-succinyllysine. 2 positions are modified to N6-acetyllysine; alternate: lysine 100 and lysine 158. 2 positions are modified to N6-succinyllysine; alternate: lysine 100 and lysine 158. An N6-acetyllysine mark is found at lysine 172, lysine 176, and lysine 192. Lysine 199 bears the N6-succinyllysine mark.

It belongs to the ATPase delta chain family. Component of the ATP synthase complex composed at least of ATP5F1A/subunit alpha, ATP5F1B/subunit beta, ATP5MC1/subunit c (homooctomer), MT-ATP6/subunit a, MT-ATP8/subunit 8, ATP5ME/subunit e, ATP5MF/subunit f, ATP5MG/subunit g, ATP5MK/subunit k, ATP5MJ/subunit j, ATP5F1C/subunit gamma, ATP5F1D/subunit delta, ATP5F1E/subunit epsilon, ATP5PF/subunit F6, ATP5PB/subunit b, ATP5PD/subunit d, ATP5PO/subunit OSCP. ATP synthase complex consists of a soluble F(1) head domain (subunits alpha(3) and beta(3)) - the catalytic core - and a membrane F(0) domain - the membrane proton channel (subunits c, a, 8, e, f, g, k and j). These two domains are linked by a central stalk (subunits gamma, delta, and epsilon) rotating inside the F1 region and a stationary peripheral stalk (subunits F6, b, d, and OSCP). In response to mitochondrial stress, the precursor protein is ubiquitinated by the SIFI complex in the cytoplasm before mitochondrial import, leading to its degradation. Within the SIFI complex, UBR4 initiates ubiquitin chain that are further elongated or branched by KCMF1.

It localises to the mitochondrion. The protein localises to the mitochondrion inner membrane. Subunit OSCP, of the mitochondrial membrane ATP synthase complex (F(1)F(0) ATP synthase or Complex V) that produces ATP from ADP in the presence of a proton gradient across the membrane which is generated by electron transport complexes of the respiratory chain. ATP synthase complex consist of a soluble F(1) head domain - the catalytic core - and a membrane F(1) domain - the membrane proton channel. These two domains are linked by a central stalk rotating inside the F(1) region and a stationary peripheral stalk. During catalysis, ATP synthesis in the catalytic domain of F(1) is coupled via a rotary mechanism of the central stalk subunits to proton translocation. In vivo, can only synthesize ATP although its ATP hydrolase activity can be activated artificially in vitro. Part of the complex F(0) domain. Part of the complex F(0) domain and the peripheric stalk, which acts as a stator to hold the catalytic alpha(3)beta(3) subcomplex and subunit a/ATP6 static relative to the rotary elements. This chain is ATP synthase peripheral stalk subunit OSCP, mitochondrial, found in Rhinolophus ferrumequinum (Greater horseshoe bat).